A 385-amino-acid chain; its full sequence is MLISNTYNQHFPQLTQEQIASNATKKVICGMSGGVDSSVSAFILQQQGYQVEGLFMKNWEEDDDDDTDYCTAAADLADAQAVCDKLGIKLHKINFAAEYWDNVFEHFLTEYKAGRTPNPDILCNKEIKFKAFLEYAAEDLGADYIATGHYVRRAGDNENAKLLRGLDANKDQSYFLYTLSHKQVGQSLFPVGEIEKPIVRAIAEDLGLITAKKKDSTGICFIGERKFKDFLARYLPAQPGNIRTVDDEIIGRHDGLMYHTLGQRKGLGIGGLKNAGDEAWYVVDKDVENNELIVAQGHDHPRLFSKGLIASQLHWVDREPIRESLRCTVKTRYRQQDIPCVIEPIDDETIRVIFDEPQSAVTPGQSAVFYLGEVCLGGGIIAERI.

ATP is bound by residues 30 to 37 (GMSGGVDS) and Met56. Positions 118-120 (NPD) are interaction with target base in tRNA. Catalysis depends on Cys123, which acts as the Nucleophile. Cys123 and Cys220 are disulfide-bonded. Residue Gly148 coordinates ATP. The tract at residues 170–172 (KDQ) is interaction with tRNA. Cys220 functions as the Cysteine persulfide intermediate in the catalytic mechanism. The interval 332–333 (RY) is interaction with tRNA.

The protein belongs to the MnmA/TRMU family.

The protein resides in the cytoplasm. The catalysed reaction is S-sulfanyl-L-cysteinyl-[protein] + uridine(34) in tRNA + AH2 + ATP = 2-thiouridine(34) in tRNA + L-cysteinyl-[protein] + A + AMP + diphosphate + H(+). Its function is as follows. Catalyzes the 2-thiolation of uridine at the wobble position (U34) of tRNA, leading to the formation of s(2)U34. This Haemophilus influenzae (strain PittGG) protein is tRNA-specific 2-thiouridylase MnmA.